Consider the following 816-residue polypeptide: Microbial collagenase (816 aa).

The signal sequence occupies residues 1–27 (MSHIRFFPRHRLALACMLASVSSFSFA). Position 435 (His-435) interacts with Zn(2+). Glu-436 is an active-site residue. A Zn(2+)-binding site is contributed by His-439.

This sequence belongs to the peptidase M9A family. Zn(2+) is required as a cofactor.

The protein localises to the secreted. It carries out the reaction Digestion of native collagen in the triple helical region at Xaa-|-Gly bonds. With synthetic peptides, a preference is shown for Gly at P3 and P1', Pro and Ala at P2 and P2', and hydroxyproline, Ala or Arg at P3'.. Functionally, possesses gelatinolytic activity. Can cause weak haemolysis on blood agar. In Vibrio parahaemolyticus serotype O3:K6 (strain RIMD 2210633), this protein is Microbial collagenase (prt).